A 241-amino-acid polypeptide reads, in one-letter code: Small ribosomal subunit protein uS2 (241 aa).

It belongs to the universal ribosomal protein uS2 family.

The chain is Small ribosomal subunit protein uS2 from Cronobacter sakazakii (strain ATCC BAA-894) (Enterobacter sakazakii).